Consider the following 269-residue polypeptide: tRNA pseudouridine synthase A (269 aa).

The active-site Nucleophile is D55. Y111 contributes to the substrate binding site.

The protein belongs to the tRNA pseudouridine synthase TruA family.

The catalysed reaction is uridine(38/39/40) in tRNA = pseudouridine(38/39/40) in tRNA. Formation of pseudouridine at positions 38, 39 and 40 in the anticodon stem and loop of transfer RNAs. This is tRNA pseudouridine synthase A from Methanosarcina acetivorans (strain ATCC 35395 / DSM 2834 / JCM 12185 / C2A).